The sequence spans 521 residues: Glutamate--cysteine ligase (521 aa).

The protein belongs to the glutamate--cysteine ligase type 1 family. Type 1 subfamily.

The enzyme catalyses L-cysteine + L-glutamate + ATP = gamma-L-glutamyl-L-cysteine + ADP + phosphate + H(+). It participates in sulfur metabolism; glutathione biosynthesis; glutathione from L-cysteine and L-glutamate: step 1/2. This is Glutamate--cysteine ligase from Aliivibrio salmonicida (strain LFI1238) (Vibrio salmonicida (strain LFI1238)).